Here is a 450-residue protein sequence, read N- to C-terminus: tRNA modification GTPase MnmE (450 aa).

Residues Arg-26, Glu-84, and Lys-123 each coordinate (6S)-5-formyl-5,6,7,8-tetrahydrofolate. A TrmE-type G domain is found at 219–376; it reads GMHVVLVGQP…LKAKLLEMIG (158 aa). Asn-229 provides a ligand contact to K(+). GTP contacts are provided by residues 229–234, 248–254, 273–276, and 357–359; these read NVGKSS, TDIAGTT, DTAG, and SAR. Ser-233 serves as a coordination point for Mg(2+). 3 residues coordinate K(+): Thr-248, Ile-250, and Thr-253. Residue Thr-254 coordinates Mg(2+). Lys-450 contributes to the (6S)-5-formyl-5,6,7,8-tetrahydrofolate binding site.

This sequence belongs to the TRAFAC class TrmE-Era-EngA-EngB-Septin-like GTPase superfamily. TrmE GTPase family. In terms of assembly, homodimer. Heterotetramer of two MnmE and two MnmG subunits. K(+) serves as cofactor.

It is found in the cytoplasm. In terms of biological role, exhibits a very high intrinsic GTPase hydrolysis rate. Involved in the addition of a carboxymethylaminomethyl (cmnm) group at the wobble position (U34) of certain tRNAs, forming tRNA-cmnm(5)s(2)U34. The chain is tRNA modification GTPase MnmE from Chromobacterium violaceum (strain ATCC 12472 / DSM 30191 / JCM 1249 / CCUG 213 / NBRC 12614 / NCIMB 9131 / NCTC 9757 / MK).